The chain runs to 422 residues: UDP-N-acetylglucosamine 1-carboxyvinyltransferase (422 aa).

K22–N23 is a binding site for phosphoenolpyruvate. R93 contacts UDP-N-acetyl-alpha-D-glucosamine. The active-site Proton donor is the C117. C117 carries the post-translational modification 2-(S-cysteinyl)pyruvic acid O-phosphothioketal. UDP-N-acetyl-alpha-D-glucosamine contacts are provided by residues R122–L126, D308, and L330.

This sequence belongs to the EPSP synthase family. MurA subfamily.

It is found in the cytoplasm. It catalyses the reaction phosphoenolpyruvate + UDP-N-acetyl-alpha-D-glucosamine = UDP-N-acetyl-3-O-(1-carboxyvinyl)-alpha-D-glucosamine + phosphate. Its pathway is cell wall biogenesis; peptidoglycan biosynthesis. Its function is as follows. Cell wall formation. Adds enolpyruvyl to UDP-N-acetylglucosamine. The protein is UDP-N-acetylglucosamine 1-carboxyvinyltransferase of Helicobacter pylori (strain P12).